The sequence spans 477 residues: Glycogen synthase (477 aa).

Lys15 contacts ADP-alpha-D-glucose.

It belongs to the glycosyltransferase 1 family. Bacterial/plant glycogen synthase subfamily.

The catalysed reaction is [(1-&gt;4)-alpha-D-glucosyl](n) + ADP-alpha-D-glucose = [(1-&gt;4)-alpha-D-glucosyl](n+1) + ADP + H(+). The protein operates within glycan biosynthesis; glycogen biosynthesis. Functionally, synthesizes alpha-1,4-glucan chains using ADP-glucose. This chain is Glycogen synthase, found in Escherichia fergusonii (strain ATCC 35469 / DSM 13698 / CCUG 18766 / IAM 14443 / JCM 21226 / LMG 7866 / NBRC 102419 / NCTC 12128 / CDC 0568-73).